The following is a 340-amino-acid chain: Ferrochelatase (340 aa).

Fe cation contacts are provided by H189 and E292.

It belongs to the ferrochelatase family.

Its subcellular location is the cytoplasm. It carries out the reaction heme b + 2 H(+) = protoporphyrin IX + Fe(2+). Its pathway is porphyrin-containing compound metabolism; protoheme biosynthesis; protoheme from protoporphyrin-IX: step 1/1. In terms of biological role, catalyzes the ferrous insertion into protoporphyrin IX. The sequence is that of Ferrochelatase from Pseudomonas syringae pv. syringae (strain B728a).